A 155-amino-acid polypeptide reads, in one-letter code: RxLR effector protein 24 (155 aa).

The first 21 residues, M1–A21, serve as a signal peptide directing secretion. A RxLR-dEER motif is present at residues R52 to R78. The RABA-binding domain stretch occupies residues E105 to T155.

This sequence belongs to the RxLR effector family. In terms of assembly, interacts with Arabidopsis thaliana RABA GTPases including RABA1a, RABA1b, RABA1c, RABA1d, RABA1f, RABA2a, RABA2c, RABA2d, RABA4a, RABA4b and RABA4c.

The protein resides in the secreted. The protein localises to the host cell membrane. Its subcellular location is the host endomembrane system. Functionally, effector protein that contributes to pathogen virulence. Targets members of the RABA GTPases subfamily to inhibit vesicular secretion, leading to an accumulation of secretory proteins in the endoplasmic reticulum. In Phytophthora brassicae, this protein is RxLR effector protein 24.